Reading from the N-terminus, the 494-residue chain is UPF0164 protein TP_0859/TP_0860 (494 aa).

The first 44 residues, 1–44 (MVRRPCVSAAPVRVGGRLVFGFARVGSRGLCLGALLLSPRIVLA), serve as a signal peptide directing secretion.

It belongs to the UPF0164 family.

In Treponema pallidum (strain Nichols), this protein is UPF0164 protein TP_0859/TP_0860.